The primary structure comprises 204 residues: Glycerol-3-phosphate acyltransferase (204 aa).

The next 4 membrane-spanning stretches (helical) occupy residues 8 to 28 (NAQFFIAAYLIGAIPFGLLLA), 76 to 96 (GVLVLLFAYFYGVSEATLWGI), 122 to 142 (MGVMMFMLPLETIIALVVWAL), and 166 to 186 (FILHPDMAHAPVIIIGFVLLY).

This sequence belongs to the PlsY family. In terms of assembly, probably interacts with PlsX.

It is found in the cell inner membrane. It carries out the reaction an acyl phosphate + sn-glycerol 3-phosphate = a 1-acyl-sn-glycero-3-phosphate + phosphate. It participates in lipid metabolism; phospholipid metabolism. Functionally, catalyzes the transfer of an acyl group from acyl-phosphate (acyl-PO(4)) to glycerol-3-phosphate (G3P) to form lysophosphatidic acid (LPA). This enzyme utilizes acyl-phosphate as fatty acyl donor, but not acyl-CoA or acyl-ACP. This is Glycerol-3-phosphate acyltransferase from Sulfurimonas denitrificans (strain ATCC 33889 / DSM 1251) (Thiomicrospira denitrificans (strain ATCC 33889 / DSM 1251)).